The primary structure comprises 695 residues: Polyribonucleotide nucleotidyltransferase (695 aa).

Mg(2+)-binding residues include Asp486 and Asp492. In terms of domain architecture, KH spans Pro553–Val612. An S1 motif domain is found at Gly622–Lys690.

The protein belongs to the polyribonucleotide nucleotidyltransferase family. Component of the RNA degradosome, which is a multiprotein complex involved in RNA processing and mRNA degradation. Mg(2+) is required as a cofactor.

It localises to the cytoplasm. The catalysed reaction is RNA(n+1) + phosphate = RNA(n) + a ribonucleoside 5'-diphosphate. Functionally, involved in mRNA degradation. Catalyzes the phosphorolysis of single-stranded polyribonucleotides processively in the 3'- to 5'-direction. This chain is Polyribonucleotide nucleotidyltransferase, found in Nitrosococcus oceani (strain ATCC 19707 / BCRC 17464 / JCM 30415 / NCIMB 11848 / C-107).